A 504-amino-acid polypeptide reads, in one-letter code: Pentatricopeptide repeat-containing protein At1g05600 (504 aa).

PPR repeat units lie at residues 45 to 79 (NGSV…SCEC), 80 to 114 (KDSV…NCVN), 115 to 145 (WSLS…YCYG), 151 to 185 (RITA…GCYP), 186 to 216 (DRDS…MFWR), 225 to 259 (DIVV…GLKA), 260 to 296 (PKRC…GAIP), 297 to 331 (CLDS…GFEP), 332 to 367 (TPFI…HCLP), 368 to 398 (TVGV…MSKQ), 404 to 438 (NEET…SHFP), and 439 to 473 (GVET…DMVP).

It belongs to the PPR family. P subfamily.

The polypeptide is Pentatricopeptide repeat-containing protein At1g05600 (Arabidopsis thaliana (Mouse-ear cress)).